Reading from the N-terminus, the 302-residue chain is G-protein coupled receptor A5 (302 aa).

Residues 1 to 20 (MADSSNSSLNCTAIHDQTVL) are Extracellular-facing. The helical transmembrane segment at 21-41 (ILGQVFNSVWLFISVIFLYIF) threads the bilayer. The Cytoplasmic segment spans residues 42–50 (ACKLCFRPR). Residues 51 to 71 (IYLWLSFYTLGFMLWVLCKVL) traverse the membrane as a helical segment. Residues 72–81 (QEYVTGKFKC) lie on the Extracellular side of the membrane. The helical transmembrane segment at 82–102 (VITNCIGDFCLVFLSCIMLGI) threads the bilayer. The Cytoplasmic portion of the chain corresponds to 103–122 (MLDRYLKIQGTLRGGMKDIH). The chain crosses the membrane as a helical span at residues 123–143 (IGIFVSASCFGSLMIALLDGL). Over 144–173 (HMGDSEKLQFNGTESFKCLPATSVSSYKAQ) the chain is Extracellular. Residues 174-194 (LMFKSIFCIICIIMCLILTCL) form a helical membrane-spanning segment. The Cytoplasmic portion of the chain corresponds to 195 to 208 (TAKKVLGTRLRKKY). A helical transmembrane segment spans residues 209 to 229 (VIVGNVGLLSFVNILLWVMIA). At 230-249 (CGLLKQALESNLSLCPTKQS) the chain is on the extracellular side. Residues 250–270 (TYIYPYTMPVTVIFVLVIYLF) traverse the membrane as a helical segment. The Cytoplasmic segment spans residues 271–302 (SSTHMKNAMRKSGQIRHSLSSPNQVQSSFRLV).

Belongs to the G-protein coupled receptor 1 family.

It localises to the host cell membrane. Its subcellular location is the host endoplasmic reticulum membrane. Its function is as follows. Acts as a viral G-protein coupled receptor that constitutively activates host alphai-type G-proteins, thereby inhibiting host forskolin-triggered CREB activation. The protein is G-protein coupled receptor A5 (A5) of Connochaetes taurinus (Blue wildebeest).